A 324-amino-acid chain; its full sequence is uncharacterized protein (324 aa).

This is an uncharacterized protein from Homo sapiens (Human).